Reading from the N-terminus, the 360-residue chain is N-acetylmuramoyl-L-alanine amidase CwlL (360 aa).

The signal sequence occupies residues 1–39 (MVKVVKNFVKVNQYTRPGLKLAGVKGIVMHYTATPGASA). Residues 40 to 154 (LNERDYFNGT…DVTNKICPAP (115 aa)) form the N-acetylmuramoyl-L-alanine amidase domain. Repeat copies occupy residues 166 to 191 (RKKVDSLLGNKTVSKTTSSTSQSSKS), 196 to 259 (LKKG…EKAL), 265 to 289 (KKKKPSSNGKKTSYPLPSGIYKVKS), and 291 to 355 (LMKG…KAKL). 2 X approximate repeats regions lie at residues 166–289 (RKKV…KVKS) and 196–355 (LKKG…KAKL).

Belongs to the N-acetylmuramoyl-L-alanine amidase 2 family.

The protein resides in the secreted. It carries out the reaction Hydrolyzes the link between N-acetylmuramoyl residues and L-amino acid residues in certain cell-wall glycopeptides.. This chain is N-acetylmuramoyl-L-alanine amidase CwlL (cwlL), found in Bacillus licheniformis.